A 72-amino-acid polypeptide reads, in one-letter code: Peptide Ctri9194 (72 aa).

An N-terminal signal peptide occupies residues Met1–Thr23. Isoleucine amide is present on Ile38. Residues Ser42–Tyr72 constitute a propeptide that is removed on maturation.

It belongs to the non-disulfide-bridged peptide (NDBP) superfamily. Short antimicrobial peptide (group 4) family. Expressed by the venom gland.

It is found in the secreted. In terms of biological role, antimicrobial peptide. This Chaerilus tricostatus (Scorpion) protein is Peptide Ctri9194.